A 354-amino-acid polypeptide reads, in one-letter code: MQRLRESPPPKTRCLGEASDIIPAADRFLRCANLILPWLNPRELAVVAQTCKTLSLISKSLTIHRSLDAARSLENISIPFHNSIDSQRYAYFIYTPFQIPASSPPPPRQWWGAAANECGSESRPCFDSVSESGRFGVSLVDESGCECERCEEGYCKCLAFAGMEEIANECGSGCGCGSDCSNRVTQKGVSVSLKIVRDEKKGWCLYADQLIKQGQFICEYAGELLTTDEARRRQNIYDKLRSTQSFASALLVVREHLPSGQACLRINIDATRIGNVARFINHSCDGGNLSTVLLRSSGALLPRLCFFAAKDIIAEEELSFSYGDVSVAGENRDDKLNCSCGSSCCLGTLPCENT.

One can recognise a Pre-SET domain in the interval 143–188 (SGCECERCEEGYCKCLAFAGMEEIANECGSGCGCGSDCSNRVTQKG). The Zn(2+) site is built by Cys-145, Cys-147, Cys-150, Cys-155, Cys-157, Cys-170, Cys-174, Cys-176, and Cys-180. The SET domain occupies 191 to 323 (VSLKIVRDEK…AEEELSFSYG (133 aa)). Residues 201–203 (KGW) and 281–282 (NH) each bind S-adenosyl-L-methionine. Cys-284 serves as a coordination point for Zn(2+). An S-adenosyl-L-methionine-binding site is contributed by Tyr-322. The 17-residue stretch at 334 to 350 (DKLNCSCGSSCCLGTLP) folds into the Post-SET domain. The Zn(2+) site is built by Cys-338, Cys-340, and Cys-345.

This sequence belongs to the class V-like SAM-binding methyltransferase superfamily.

The protein resides in the nucleus. The protein localises to the chromosome. It catalyses the reaction L-lysyl-[histone] + S-adenosyl-L-methionine = N(6)-methyl-L-lysyl-[histone] + S-adenosyl-L-homocysteine + H(+). Histone methyltransferase. This is Histone-lysine N-methyltransferase SUVR3 (SUVR3) from Arabidopsis thaliana (Mouse-ear cress).